Reading from the N-terminus, the 191-residue chain is Glycerol-3-phosphate acyltransferase (191 aa).

5 consecutive transmembrane segments (helical) span residues 10–30 (LAFI…CISA), 57–77 (FGSV…FLAV), 84–104 (FAST…YMAF), 118–138 (FVLV…FFVL), and 158–178 (YALL…LIFI).

This sequence belongs to the PlsY family. As to quaternary structure, probably interacts with PlsX.

The protein localises to the cell inner membrane. The enzyme catalyses an acyl phosphate + sn-glycerol 3-phosphate = a 1-acyl-sn-glycero-3-phosphate + phosphate. The protein operates within lipid metabolism; phospholipid metabolism. In terms of biological role, catalyzes the transfer of an acyl group from acyl-phosphate (acyl-PO(4)) to glycerol-3-phosphate (G3P) to form lysophosphatidic acid (LPA). This enzyme utilizes acyl-phosphate as fatty acyl donor, but not acyl-CoA or acyl-ACP. This chain is Glycerol-3-phosphate acyltransferase, found in Neorickettsia sennetsu (strain ATCC VR-367 / Miyayama) (Ehrlichia sennetsu).